The following is a 309-amino-acid chain: Serine/threonine-protein phosphatase 2A catalytic subunit beta isoform (309 aa).

Asp57, His59, Asp85, and Asn117 together coordinate Mn(2+). Catalysis depends on His118, which acts as the Proton donor. Mn(2+) contacts are provided by His167 and His241. Phosphotyrosine is present on Tyr307. Residue Leu309 is modified to Leucine methyl ester.

It belongs to the PPP phosphatase family. PP-1 subfamily. PP2A consists of a common heterodimeric core enzyme (composed of a 36 kDa catalytic subunit (subunit C) and a 65 kDa constant regulatory subunit (PR65) (subunit A)) that associates with a variety of regulatory subunits. Proteins that associate with the core dimer include three families of regulatory subunits B (the R2/B/PR55/B55, R3/B''/PR72/PR130/PR59 and R5/B'/B56 families), the 48 kDa variable regulatory subunit, viral proteins, and cell signaling molecules. Binds PPME1. May indirectly interact with SGO1, most probably through regulatory B56 subunits. Interacts with CTTNBP2NL. Interacts with PTPA. Found in a complex with at least ARL2, PPP2CB, PPP2R1A, PPP2R2A, PPP2R5E and TBCD. Interacts with TBCD. Part of the core of STRIPAK complexes composed of PP2A catalytic and scaffolding subunits, the striatins (PP2A regulatory subunits), the striatin-associated proteins MOB4, STRIP1 and STRIP2, PDCD10 and members of the STE20 kinases, such as STK24 and STK26. The cofactor is Mn(2+). Post-translationally, reversibly methyl esterified on Leu-309 by leucine carboxyl methyltransferase 1 (Lcmt1) and protein phosphatase methylesterase 1 (Ppme1). Carboxyl methylation influences the affinity of the catalytic subunit for the different regulatory subunits, thereby modulating the PP2A holoenzyme's substrate specificity, enzyme activity and cellular localization. In terms of processing, phosphorylation of either threonine (by autophosphorylation-activated protein kinase) or tyrosine results in inactivation of the phosphatase. Auto-dephosphorylation has been suggested as a mechanism for reactivation. May be monoubiquitinated by NOSIP.

Its subcellular location is the cytoplasm. It is found in the nucleus. The protein localises to the chromosome. It localises to the centromere. The protein resides in the cytoskeleton. Its subcellular location is the spindle pole. The enzyme catalyses O-phospho-L-seryl-[protein] + H2O = L-seryl-[protein] + phosphate. It carries out the reaction O-phospho-L-threonyl-[protein] + H2O = L-threonyl-[protein] + phosphate. Its function is as follows. Catalytic subunit of protein phosphatase 2A (PP2A), a serine/threonine phosphatase involved in the regulation of a wide variety of enzymes, signal transduction pathways, and cellular events. PP2A can modulate the activity of phosphorylase B kinase, casein kinase 2, mitogen-stimulated S6 kinase, and MAP-2 kinase. Part of the striatin-interacting phosphatase and kinase (STRIPAK) complexes. STRIPAK complexes have critical roles in protein (de)phosphorylation and are regulators of multiple signaling pathways including Hippo, MAPK, nuclear receptor and cytoskeleton remodeling. Different types of STRIPAK complexes are involved in a variety of biological processes such as cell growth, differentiation, apoptosis, metabolism and immune regulation. This is Serine/threonine-protein phosphatase 2A catalytic subunit beta isoform (Ppp2cb) from Mus musculus (Mouse).